The chain runs to 164 residues: Protein-export protein SecB (164 aa).

It belongs to the SecB family. As to quaternary structure, homotetramer, a dimer of dimers. One homotetramer interacts with 1 SecA dimer.

Its subcellular location is the cytoplasm. In terms of biological role, one of the proteins required for the normal export of preproteins out of the cell cytoplasm. It is a molecular chaperone that binds to a subset of precursor proteins, maintaining them in a translocation-competent state. It also specifically binds to its receptor SecA. The protein is Protein-export protein SecB of Caulobacter sp. (strain K31).